Here is a 299-residue protein sequence, read N- to C-terminus: Taste receptor type 2 member 4 (299 aa).

Topologically, residues 1-9 are extracellular; that stretch reads MLWLFYSSA. Residues 10 to 30 traverse the membrane as a helical segment; sequence IIASVILDFVGIIMSLFITVV. Residues 31-46 lie on the Cytoplasmic side of the membrane; that stretch reads NYKTWVKSHRISSSER. The helical transmembrane segment at 47 to 67 threads the bilayer; that stretch reads ILFSLGITRFFMLALFLVNTI. Residues 68-81 are Extracellular-facing; the sequence is YFVSSNKERSVYLS. Residues 82 to 102 traverse the membrane as a helical segment; sequence AFFVLCFMFLDSSSLWFVTLL. The Cytoplasmic segment spans residues 103-131; the sequence is NSLYCVKITNFQHSVFLLLKRNISPKIPR. The chain crosses the membrane as a helical span at residues 132 to 152; it reads LLPACVLISAFTTCLYITLSQ. The Extracellular segment spans residues 153–172; it reads ASPFPELVTKRNNTSFNISE. Residues N164, N165, and N169 are each glycosylated (N-linked (GlcNAc...) asparagine). A helical transmembrane segment spans residues 173–193; sequence GILSLVVSFVLSSSLQFIINV. At 194–230 the chain is on the cytoplasmic side; sequence TSASLLIYSLRRHIRKMQKNATGFWNPQTEAHVGAMK. A helical transmembrane segment spans residues 231–251; that stretch reads LMIYFLILYIPYSVATLVQYL. Over 252–262 the chain is Extracellular; it reads PFYAGMDMGTK. The chain crosses the membrane as a helical span at residues 263–283; the sequence is SICLIFATLYSPGHSVLIIIT. Over 284 to 299 the chain is Cytoplasmic; the sequence is HPKLKTTAKKILCFKK.

Belongs to the G-protein coupled receptor T2R family.

It is found in the membrane. The protein resides in the cell projection. The protein localises to the cilium membrane. Functionally, gustducin-coupled receptor implicated in the perception of bitter compounds in the oral cavity and the gastrointestinal tract. Signals through PLCB2 and the calcium-regulated cation channel TRPM5. In airway epithelial cells, binding of denatonium increases the intracellular calcium ion concentration and stimulates ciliary beat frequency. The chain is Taste receptor type 2 member 4 (TAS2R4) from Papio hamadryas (Hamadryas baboon).